Reading from the N-terminus, the 471-residue chain is Ribulose bisphosphate carboxylase large chain (471 aa).

N115 and T165 together coordinate substrate. The active-site Proton acceptor is K167. K169 lines the substrate pocket. Mg(2+) is bound by residues K193, D195, and E196. K193 carries the post-translational modification N6-carboxylysine. Catalysis depends on H286, which acts as the Proton acceptor. Substrate contacts are provided by R287, H319, and S371.

Belongs to the RuBisCO large chain family. Type I subfamily. As to quaternary structure, heterohexadecamer of 8 large chains and 8 small chains. Requires Mg(2+) as cofactor.

Its subcellular location is the carboxysome. The catalysed reaction is 2 (2R)-3-phosphoglycerate + 2 H(+) = D-ribulose 1,5-bisphosphate + CO2 + H2O. It catalyses the reaction D-ribulose 1,5-bisphosphate + O2 = 2-phosphoglycolate + (2R)-3-phosphoglycerate + 2 H(+). RuBisCO catalyzes two reactions: the carboxylation of D-ribulose 1,5-bisphosphate, the primary event in carbon dioxide fixation, as well as the oxidative fragmentation of the pentose substrate in the photorespiration process. Both reactions occur simultaneously and in competition at the same active site. In Synechococcus sp. (strain WH7803), this protein is Ribulose bisphosphate carboxylase large chain.